A 442-amino-acid chain; its full sequence is 5-methylthioadenosine/S-adenosylhomocysteine deaminase (442 aa).

Positions 70 and 72 each coordinate Zn(2+). The substrate site is built by E99 and H191. Residue H218 coordinates Zn(2+). Substrate-binding residues include E221 and D306. D306 is a binding site for Zn(2+).

The protein belongs to the metallo-dependent hydrolases superfamily. MTA/SAH deaminase family. It depends on Zn(2+) as a cofactor.

The catalysed reaction is S-adenosyl-L-homocysteine + H2O + H(+) = S-inosyl-L-homocysteine + NH4(+). The enzyme catalyses S-methyl-5'-thioadenosine + H2O + H(+) = S-methyl-5'-thioinosine + NH4(+). Catalyzes the deamination of 5-methylthioadenosine and S-adenosyl-L-homocysteine into 5-methylthioinosine and S-inosyl-L-homocysteine, respectively. Is also able to deaminate adenosine. The sequence is that of 5-methylthioadenosine/S-adenosylhomocysteine deaminase from Nitratidesulfovibrio vulgaris (strain ATCC 29579 / DSM 644 / CCUG 34227 / NCIMB 8303 / VKM B-1760 / Hildenborough) (Desulfovibrio vulgaris).